Reading from the N-terminus, the 211-residue chain is MSTDLRTRVLSEHHVSRETAASLDLYVAQLTRWQTVKNLVGPATLKEVWHRHIADALQLLSIAPEATRWLDLGSGAGIPGLILALAGKERPGFHVRLVESNARKCAFLSETARLTGAPVTVHNARIEAVIGTLTDTEIVCARALAPLSQLLAWTEPLLTSGTTGLFPKGRDAATELTEAEDEWTFTRDLIPSRTDSQARIVRVTSLSRVDP.

S-adenosyl-L-methionine-binding positions include Gly-73, 126–127 (IE), and Arg-142.

The protein belongs to the methyltransferase superfamily. RNA methyltransferase RsmG family.

Its subcellular location is the cytoplasm. The enzyme catalyses guanosine(527) in 16S rRNA + S-adenosyl-L-methionine = N(7)-methylguanosine(527) in 16S rRNA + S-adenosyl-L-homocysteine. Functionally, specifically methylates the N7 position of guanine in position 527 of 16S rRNA. The polypeptide is Ribosomal RNA small subunit methyltransferase G (Methylorubrum extorquens (strain CM4 / NCIMB 13688) (Methylobacterium extorquens)).